We begin with the raw amino-acid sequence, 310 residues long: 5-oxoprolinase subunit C (310 aa).

It belongs to the PxpC family. Forms a complex composed of PxpA, PxpB and PxpC.

It carries out the reaction 5-oxo-L-proline + ATP + 2 H2O = L-glutamate + ADP + phosphate + H(+). Functionally, catalyzes the cleavage of 5-oxoproline to form L-glutamate coupled to the hydrolysis of ATP to ADP and inorganic phosphate. In Escherichia coli (strain K12), this protein is 5-oxoprolinase subunit C.